A 137-amino-acid polypeptide reads, in one-letter code: Large ribosomal subunit protein uL16 (137 aa).

It belongs to the universal ribosomal protein uL16 family. As to quaternary structure, part of the 50S ribosomal subunit.

In terms of biological role, binds 23S rRNA and is also seen to make contacts with the A and possibly P site tRNAs. The polypeptide is Large ribosomal subunit protein uL16 (Psychrobacter cryohalolentis (strain ATCC BAA-1226 / DSM 17306 / VKM B-2378 / K5)).